The chain runs to 270 residues: Aliphatic sulfonates import ATP-binding protein SsuB 2 (270 aa).

The 225-residue stretch at 17-241 (LLDLRIARKL…PRDRRDPSLA (225 aa)) folds into the ABC transporter domain. 50–57 (GPSGCGKS) lines the ATP pocket.

This sequence belongs to the ABC transporter superfamily. Aliphatic sulfonates importer (TC 3.A.1.17.2) family. As to quaternary structure, the complex is composed of two ATP-binding proteins (SsuB), two transmembrane proteins (SsuC) and a solute-binding protein (SsuA).

The protein localises to the cell inner membrane. The catalysed reaction is ATP + H2O + aliphatic sulfonate-[sulfonate-binding protein]Side 1 = ADP + phosphate + aliphatic sulfonateSide 2 + [sulfonate-binding protein]Side 1.. Its function is as follows. Part of the ABC transporter complex SsuABC involved in aliphatic sulfonates import. Responsible for energy coupling to the transport system. In Burkholderia cenocepacia (strain HI2424), this protein is Aliphatic sulfonates import ATP-binding protein SsuB 2.